The primary structure comprises 259 residues: Activator of lactoyl-CoA dehydratase (259 aa).

Residues Cys125 and Cys164 each contribute to the [4Fe-4S] cluster site.

As to quaternary structure, homodimer. Requires [4Fe-4S] cluster as cofactor.

In terms of biological role, required for the activation of lactoyl-CoA dehydratase. This protein is extremely sensitive towards oxygen. The polypeptide is Activator of lactoyl-CoA dehydratase (lcdC) (Anaerotignum propionicum (Clostridium propionicum)).